A 276-amino-acid polypeptide reads, in one-letter code: MLEILKAVILGIVEGITEFLPISSTGHLVLVDEFIKLNEPKKFIDMFNVVIQLGAIMAVVVLYFHKLNPWSPKKSRLERSQTWTLWKKVIIAVIPSVIIGLPLNDWMDAHLMNWLVVSIALIVYGVLFIVIENHNQNLRPRFDSLNTLPYKVAILIGCFQILSLIPGTSRSGATILGAILIGTSRYVAAEFSFFLAIPTMFGASLLKLYKFFAHGGTLAGNQGLILAVGVIVSFVVAYASIRFLLNYIKTKDFKAFGWYRIILGVIVIAYFALLAH.

8 consecutive transmembrane segments (helical) span residues 2–22 (LEIL…FLPI), 43–63 (FIDM…VVLY), 83–103 (WTLW…GLPL), 111–131 (LMNW…FIVI), 147–167 (TLPY…LIPG), 186–206 (YVAA…ASLL), 224–244 (LILA…IRFL), and 255–275 (AFGW…ALLA).

This sequence belongs to the UppP family.

It localises to the cell membrane. It catalyses the reaction di-trans,octa-cis-undecaprenyl diphosphate + H2O = di-trans,octa-cis-undecaprenyl phosphate + phosphate + H(+). Catalyzes the dephosphorylation of undecaprenyl diphosphate (UPP). Confers resistance to bacitracin. In Limosilactobacillus fermentum (strain NBRC 3956 / LMG 18251) (Lactobacillus fermentum), this protein is Undecaprenyl-diphosphatase.